A 202-amino-acid chain; its full sequence is Large ribosomal subunit protein eL13 (202 aa).

This sequence belongs to the eukaryotic ribosomal protein eL13 family.

This is Large ribosomal subunit protein eL13 (RPL13) from Nicotiana tabacum (Common tobacco).